The following is a 227-amino-acid chain: MELVFIRHGFSEWNAKNLFTGWRDVNLTERGIEEAKAAGKKLLEAGYEFDIAFTSVLTRAIKTCNIVLEESNQLWIPQVKHWRLNERHYGALQGLDKKATAEQYGDEQVHIWRRSYDVSPPDLDPQDPNSAHNDRRYALLPKDVVPNAENLKITLERVLPFWEDQIAPALLSGKRVLVTAHGNSLRALAKHIIGISDEEIMAFEIPTGQPLVLKLDEQLNFVEKFYL.

Substrate is bound by residues 7–14, 20–21, R59, 86–89, K97, 113–114, and 182–183; these read RHGFSEWN, TG, ERHY, RR, and GN. Catalysis depends on H8, which acts as the Tele-phosphohistidine intermediate. The active-site Proton donor/acceptor is the E86.

This sequence belongs to the phosphoglycerate mutase family. BPG-dependent PGAM subfamily. Homodimer.

It carries out the reaction (2R)-2-phosphoglycerate = (2R)-3-phosphoglycerate. It participates in carbohydrate degradation; glycolysis; pyruvate from D-glyceraldehyde 3-phosphate: step 3/5. Its function is as follows. Catalyzes the interconversion of 2-phosphoglycerate and 3-phosphoglycerate. In Histophilus somni (strain 129Pt) (Haemophilus somnus), this protein is 2,3-bisphosphoglycerate-dependent phosphoglycerate mutase.